A 598-amino-acid polypeptide reads, in one-letter code: Probable translation initiation factor IF-2 (598 aa).

Positions 8 to 226 (IRQPIISVLG…VTGLAQRFLE (219 aa)) constitute a tr-type G domain. The tract at residues 17–24 (GHVDHGKT) is G1. 17-24 (GHVDHGKT) contacts GTP. The tract at residues 42–46 (GITQH) is G2. The G3 stretch occupies residues 81-84 (DTPG). Residues 81–85 (DTPGH) and 135–138 (NKVD) contribute to the GTP site. The G4 stretch occupies residues 135–138 (NKVD). A G5 region spans residues 203 to 205 (SGV).

It belongs to the TRAFAC class translation factor GTPase superfamily. Classic translation factor GTPase family. IF-2 subfamily.

Functionally, function in general translation initiation by promoting the binding of the formylmethionine-tRNA to ribosomes. Seems to function along with eIF-2. This Methanopyrus kandleri (strain AV19 / DSM 6324 / JCM 9639 / NBRC 100938) protein is Probable translation initiation factor IF-2.